The chain runs to 1266 residues: TBC1 domain family member 9 (1266 aa).

GRAM domains lie at 146–213 (VKFH…EKNA) and 293–361 (ERYR…EKAD). The interval 415-456 (SYNSSDDEVYSRPSSLVSSSPQRSTSSDADGERQFNLNGNSV) is disordered. Residues 425-441 (SRPSSLVSSSPQRSTSS) are compositionally biased toward low complexity. The Rab-GAP TBC domain maps to 515–702 (GIPESMRGEL…VVVDCFFYEG (188 aa)). The region spanning 886-921 (HSDVLASRLFQLLDENGDSLINFREFVSGLSAACHG) is the EF-hand domain. 2 disordered regions span residues 1075-1095 (AKEG…PGVL) and 1132-1164 (DIKL…SMSS).

In terms of biological role, may act as a GTPase-activating protein for Rab family protein(s). The polypeptide is TBC1 domain family member 9 (TBC1D9) (Homo sapiens (Human)).